Consider the following 156-residue polypeptide: Small ribosomal subunit protein uS7 (156 aa).

It belongs to the universal ribosomal protein uS7 family. In terms of assembly, part of the 30S ribosomal subunit. Contacts proteins S9 and S11.

In terms of biological role, one of the primary rRNA binding proteins, it binds directly to 16S rRNA where it nucleates assembly of the head domain of the 30S subunit. Is located at the subunit interface close to the decoding center, probably blocks exit of the E-site tRNA. In Picosynechococcus sp. (strain ATCC 27264 / PCC 7002 / PR-6) (Agmenellum quadruplicatum), this protein is Small ribosomal subunit protein uS7.